The primary structure comprises 242 residues: Probable 2-phosphosulfolactate phosphatase (242 aa).

The protein belongs to the ComB family. Requires Mg(2+) as cofactor.

The catalysed reaction is (2R)-O-phospho-3-sulfolactate + H2O = (2R)-3-sulfolactate + phosphate. The polypeptide is Probable 2-phosphosulfolactate phosphatase (Picosynechococcus sp. (strain ATCC 27264 / PCC 7002 / PR-6) (Agmenellum quadruplicatum)).